A 203-amino-acid chain; its full sequence is MVSTYRVAVLGARGVGKSAIVRQFLYNEFSEVCVPTTARRLYLPAVVMNGHVHDLQILDFPPISAFPVNTLQEWADTCCRGLRSVHAYILVYDICCFDSFEYVKTIRQQILETRVIGTSETPIIIVGNKRDLQRGRVIPRWNVSHLVRKTWKCGYVECSAKYNWHILLLFSELLKSVGCARCKHVHAALRFQGALRRNRCAIM.

The small GTPase-like stretch occupies residues 1 to 203; that stretch reads MVSTYRVAVL…ALRRNRCAIM (203 aa). 11 to 18 contacts GTP; sequence GARGVGKS. An Effector region motif is present at residues 33–42; sequence CVPTTARRLY. Residues 59 to 62 and 128 to 131 contribute to the GTP site; these read DFPP and NKRD. Cysteine 200 carries the post-translational modification Cysteine methyl ester. Cysteine 200 carries the S-geranylgeranyl cysteine lipid modification. Positions 201 to 203 are cleaved as a propeptide — removed in mature form; it reads AIM.

This sequence belongs to the small GTPase superfamily. Ras family. In terms of assembly, interacts with CADPS. In terms of tissue distribution, expressed at high levels in skeletal muscle and, at much lower levels, in heart, brain and pancreas.

It is found in the cell membrane. It catalyses the reaction GTP + H2O = GDP + phosphate + H(+). Functionally, may facilitate the release of atrial natriuretic peptide by cardiomyocytes and hence play a role in the regulation of arterial pressure. In Homo sapiens (Human), this protein is Ras-like protein family member 10B (RASL10B).